A 108-amino-acid chain; its full sequence is Complement inhibitor CirpT4 (108 aa).

Residues 1–19 (MRAFVALFCTLVAFATVIC) form the signal peptide. Disulfide bonds link cysteine 40–cysteine 64, cysteine 59–cysteine 98, cysteine 76–cysteine 99, and cysteine 85–cysteine 104.

The protein belongs to the CirpT family. In terms of tissue distribution, expressed in salivary glands.

It localises to the secreted. Its function is as follows. Complement inhibitor. Prevents complement-mediated activation of C5 by sterically preventing direct binding of C5 to its convertase (binding with domains MG4 and MG5). Binds C5 at a different binding site than the other tick complement inhibitors OmCI and RaCI3, and the drug eculizumab. Inhibits the complement in human, rat and guinea pig, and also shows a reduced inhibition in rabbit and pig. The sequence is that of Complement inhibitor CirpT4 from Amblyomma americanum (Lone star tick).